Here is a 429-residue protein sequence, read N- to C-terminus: Protein AST1 (429 aa).

As to quaternary structure, interacts with PMA1.

Its subcellular location is the cell membrane. The protein localises to the membrane raft. It localises to the golgi apparatus membrane. It is found in the late endosome membrane. Its function is as follows. Lipid raft-associated protein involved in the targeting of PMA1 from Golgi to the plasma membrane. May induce clustering of PMA1, which facilitates partition of PMA1 into lipid rafts after leaving the ER and its transport to the cell surface. The sequence is that of Protein AST1 from Saccharomyces cerevisiae (strain ATCC 204508 / S288c) (Baker's yeast).